A 200-amino-acid polypeptide reads, in one-letter code: Ras-related protein Rab-10 (200 aa).

The GTP site is built by serine 18, glycine 19, valine 20, glycine 21, lysine 22, threonine 23, cysteine 24, asparagine 35, threonine 36, serine 40, and threonine 41. Residue threonine 23 participates in Mg(2+) binding. Short sequence motifs (switch) lie at residues 32-46 (DAFNTTFISTIEIDF) and 64-81 (DTAGQERFHTITTSYYRG). 2 residues coordinate Mg(2+): threonine 41 and aspartate 64. Position 67 (glycine 67) interacts with GTP. The residue at position 73 (threonine 73) is a Phosphothreonine. At lysine 102 the chain carries N6-acetyllysine. Lysine 102 participates in a covalent cross-link: Glycyl lysine isopeptide (Lys-Gly) (interchain with G-Cter in ubiquitin). Positions 122, 123, 125, and 126 each coordinate GTP. Lysine 136 is covalently cross-linked (Glycyl lysine isopeptide (Lys-Gly) (interchain with G-Cter in ubiquitin)). 3 residues coordinate GTP: serine 152, alanine 153, and lysine 154. Lysine 154 participates in a covalent cross-link: Glycyl lysine isopeptide (Lys-Gly) (interchain with G-Cter in ubiquitin). 2 S-geranylgeranyl cysteine lipidation sites follow: cysteine 199 and cysteine 200.

This sequence belongs to the small GTPase superfamily. Rab family. As to quaternary structure, interacts with MYO5A; mediates the transport to the plasma membrane of SLC2A4/GLUT4 storage vesicles. Interacts with GDI1 and with GDI2; negatively regulates RAB10 association with membranes and activation. Interacts (GDP-bound form) with LLGL1; the interaction is direct and promotes RAB10 association with membranes and activation through competition with the Rab inhibitor GDI1. Interacts with EXOC4; probably associates with the exocyst. Interacts (GTP-bound form) with MICALCL, MICAL1, MICAL3, EHBP1 and EHBP1L1; at least in case of MICAL1 two molecules of RAB10 can bind to one molecule of MICAL1. Interacts with TBC1D13. Interacts with SEC16A. Interacts with CHM. Interacts with LRRK2; interaction facilitates phosphorylation of Thr-73. Interacts with RILPL1 and RILPL2 when phosphorylated on Thr-73. Interacts with TBC1D21. Interacts with MARCKS. Mg(2+) serves as cofactor. Phosphorylation of Thr-73 in the switch II region by LRRK2 prevents the association of RAB regulatory proteins, including CHM and RAB GDP dissociation inhibitors GDI1 and GDI2. Phosphorylation of Thr-73 by LRRK2 is stimulated by RAB29 and RAB32. Phosphorylation by LRRK2 is required for localization to stressed lysosomes. Highest levels in neural and muscle tissues.

The protein resides in the cytoplasmic vesicle membrane. It localises to the golgi apparatus. It is found in the trans-Golgi network membrane. The protein localises to the endosome membrane. Its subcellular location is the recycling endosome membrane. The protein resides in the cytoplasmic vesicle. It localises to the phagosome membrane. It is found in the cell projection. The protein localises to the cilium. Its subcellular location is the endoplasmic reticulum membrane. The protein resides in the cytoplasm. It localises to the perinuclear region. It is found in the lysosome. The catalysed reaction is GTP + H2O = GDP + phosphate + H(+). With respect to regulation, regulated by guanine nucleotide exchange factors (GEFs) DENND4C and RABIF which promote the exchange of bound GDP for free GTP. Regulated by GTPase activating proteins (GAPs) including TBC1D21 which increase the GTP hydrolysis activity. Inhibited by GDP dissociation inhibitors GDI1 and GDI2 which prevent Rab-GDP dissociation. The small GTPases Rab are key regulators of intracellular membrane trafficking, from the formation of transport vesicles to their fusion with membranes. Rabs cycle between an inactive GDP-bound form and an active GTP-bound form that is able to recruit to membranes different set of downstream effectors directly responsible for vesicle formation, movement, tethering and fusion. That Rab is mainly involved in the biosynthetic transport of proteins from the Golgi to the plasma membrane. Regulates, for instance, SLC2A4/GLUT4 glucose transporter-enriched vesicles delivery to the plasma membrane. In parallel, it regulates the transport of TLR4, a toll-like receptor to the plasma membrane and therefore may be important for innate immune response. Also plays a specific role in asymmetric protein transport to the plasma membrane. In neurons, it is involved in axonogenesis through regulation of vesicular membrane trafficking toward the axonal plasma membrane. In epithelial cells, it regulates transport from the Golgi to the basolateral membrane. May play a role in the basolateral recycling pathway and in phagosome maturation. May play a role in endoplasmic reticulum dynamics and morphology controlling tubulation along microtubules and tubules fusion. Together with LRRK2, RAB8A, and RILPL1, it regulates ciliogenesis. When phosphorylated by LRRK2 on Thr-73, it binds RILPL1 and inhibits ciliogenesis. Participates in the export of a subset of neosynthesized proteins through a Rab8-Rab10-Rab11-dependent endososomal export route. Targeted to and stabilized on stressed lysosomes through LRRK2 phosphorylation where it promotes the extracellular release of lysosomal content through EHBP1 and EHNP1L1 effector proteins. This is Ras-related protein Rab-10 from Rattus norvegicus (Rat).